The following is a 208-amino-acid chain: Mediator of RNA polymerase II transcription subunit 18 (208 aa).

At S66 the chain carries Phosphoserine.

This sequence belongs to the Mediator complex subunit 18 family. As to quaternary structure, component of the Mediator complex, which is composed of MED1, MED4, MED6, MED7, MED8, MED9, MED10, MED11, MED12, MED13, MED13L, MED14, MED15, MED16, MED17, MED18, MED19, MED20, MED21, MED22, MED23, MED24, MED25, MED26, MED27, MED29, MED30, MED31, CCNC, CDK8 and CDC2L6/CDK11. The MED12, MED13, CCNC and CDK8 subunits form a distinct module termed the CDK8 module. Mediator containing the CDK8 module is less active than Mediator lacking this module in supporting transcriptional activation. Individual preparations of the Mediator complex lacking one or more distinct subunits have been variously termed ARC, CRSP, DRIP, PC2, SMCC and TRAP.

Its subcellular location is the nucleus. Component of the Mediator complex, a coactivator involved in the regulated transcription of nearly all RNA polymerase II-dependent genes. Mediator functions as a bridge to convey information from gene-specific regulatory proteins to the basal RNA polymerase II transcription machinery. Mediator is recruited to promoters by direct interactions with regulatory proteins and serves as a scaffold for the assembly of a functional preinitiation complex with RNA polymerase II and the general transcription factors. This chain is Mediator of RNA polymerase II transcription subunit 18 (MED18), found in Homo sapiens (Human).